Here is a 531-residue protein sequence, read N- to C-terminus: Tyrosine 2,3-aminomutase (531 aa).

The active-site Proton donor/acceptor is the Tyr-51. A substrate-binding site is contributed by His-81. The segment at residues 140–142 (ASG) is a cross-link (5-imidazolinone (Ala-Gly)). Residue Ser-141 is modified to 2,3-didehydroalanine (Ser). Residues Asn-193 and Arg-298 each contribute to the substrate site.

The protein belongs to the TAL/TAM family. Homotetramer; dimer of dimers. Post-translationally, contains an active site 4-methylidene-imidazol-5-one (MIO), which is formed autocatalytically by cyclization and dehydration of residues Ala-Ser-Gly.

It carries out the reaction L-tyrosine = 3-amino-3-(4-hydroxyphenyl)propanoate. It catalyses the reaction L-tyrosine = (E)-4-coumarate + NH4(+). In terms of biological role, has aminomutase and, to a lesser extent, ammonia-lyase activity. Primarily, catalyzes the rearrangement of L-tyrosine to R-beta-tyrosine, which is incorporated into secondary metabolites called chondramides. The aminomutase activity mainly produces R-beta-tyrosine but also S-beta tyrosine in smaller amounts. Does not accept D-tyrosine, L-histidine or L-phenylalanine as substrates. The protein is Tyrosine 2,3-aminomutase of Chondromyces crocatus.